We begin with the raw amino-acid sequence, 103 residues long: Somatoliberin (103 aa).

The signal sequence occupies residues 1-19; that stretch reads MLLWVLFVILILTSGSHCS. 2 consecutive propeptides follow at residues 20–30 and 74–103; these read LPPSPPFRMQR and QEDS…SADA.

It belongs to the glucagon family.

The protein localises to the secreted. In terms of biological role, GRF is released by the hypothalamus and acts on the adenohypophyse to stimulate the secretion of growth hormone. The polypeptide is Somatoliberin (Ghrh) (Mus musculus (Mouse)).